Consider the following 596-residue polypeptide: MLLRLSPSRMALKRKLDSFLRNVHSQSAPPAAMAHARTVRLSAREEQLRALLLDVCRSIDAAGDVTQPIILRWAGGWVRDKLLGIESHDIDVAINAMTGVHFAQRMCDFCTLPDAIKRHGIGPRDVGNLHNVARNPDKSKHLETAMVKIFGLDLDFVNLRRETYADDSRNPAMEFGSAEEDALRRDATINALFFNLHTGCVEDFTGGLPDMAARMIRTPLDPLQTFTDDPLRVLRLVRFASRLQFYIDPATQRVMDHPTVLQALRVKISRERVGVELEKMLKGTCPPQVEVHFWAQPTRRALELLDELHLYHAIFTDPAREPTERPDLRRWHVAYECLGWLLGNRSPGSIGTLLAQSEEAVYVAWNLAAVSPWMPVEEPPGVKKKANALPPVAVIAREGFRAPNKLTDVMAASHRHRKEILQLKEAVCHGEPWTRQRDRCGMAIRRWDSQGGFWTLQVLSTLLVDAMEQVDSWPIVAHPGKPSQPADVPETPLSSGASKSKNLDPSIAKRDDFITGWQKFLDHVVELNVYNAPTMKRLLDGRALAQALGVKPGKWTGKALDVCMAWQLRNPDETDPSKAIEEVRMRRDELGIPLDG.

The N-terminal 22 residues, 1 to 22 (MLLRLSPSRMALKRKLDSFLRN), are a transit peptide targeting the mitochondrion. Residues 475–504 (IVAHPGKPSQPADVPETPLSSGASKSKNLD) are disordered.

Belongs to the tRNA nucleotidyltransferase/poly(A) polymerase family.

It localises to the mitochondrion. Nucleotidyltransferase; part of the gene cluster that mediates the biosynthesis of the lipopeptide antibiotics leucinostatins that show extensive biological activities, including antimalarial, antiviral, antibacterial, antifungal, and antitumor activities, as well as phytotoxic. The function of lcsQ within the leucinostatins biosynthesis has not been identified yet. This is Nucleotidyltransferase lcsQ from Purpureocillium lilacinum (Paecilomyces lilacinus).